We begin with the raw amino-acid sequence, 89 residues long: DNA/RNA-binding protein Alba 2 (89 aa).

Belongs to the histone-like Alba family. Forms homodimers and homotetramers. Interacts with Alba 1.

The protein resides in the cytoplasm. Its subcellular location is the chromosome. Functionally, binds double-stranded DNA tightly but without sequence specificity. Involved in DNA compaction. This chain is DNA/RNA-binding protein Alba 2, found in Archaeoglobus fulgidus (strain ATCC 49558 / DSM 4304 / JCM 9628 / NBRC 100126 / VC-16).